The following is a 4963-amino-acid chain: Kettin homolog (4963 aa).

3 consecutive Ig-like domains span residues 18 to 105 (PTFI…TCIL), 133 to 220 (PSAP…EAIS), and 303 to 392 (PIIR…ARIE). 5 disordered regions span residues 396 to 420 (LSVP…QQQQ), 466 to 501 (RRQL…EEER), 557 to 578 (IRPH…RQEV), 598 to 622 (QLYQ…QQRF), and 652 to 696 (TNGG…GHEH). Basic and acidic residues-rich tracts occupy residues 399 to 417 (PDER…RDRQ), 466 to 475 (RRQLEHEKRL), and 484 to 501 (FERE…EEER). Residues 401 to 517 (ERRKENQLRE…KHLRQQQQTQ (117 aa)) adopt a coiled-coil conformation. The segment covering 557 to 576 (IRPHQQQQQHYQQQQQSPRQ) has biased composition (low complexity). Residues 658 to 685 (AANGSAKTANGSANGSANGSAVHAANGG) are compositionally biased toward low complexity. 20 consecutive Ig-like domains span residues 706-796 (PQFL…FSLN), 806-893 (PEFT…GRVV), 937-1027 (PKFE…ANIA), 1065-1155 (PNFH…ATII), 1199-1281 (FHCE…AELT), 1462-1554 (PKFL…ITVT), 1594-1687 (PPTF…ATIR), 1728-1819 (PAFV…VDIN), 1992-2085 (PPVF…IFLE), 2126-2217 (PTFT…CTVK), 2258-2350 (PKFV…ANFT), 2391-2481 (PQFI…AQLT), 2522-2613 (PKFV…GQLS), 2654-2745 (PSFV…ANVG), 2787-2878 (PQWV…ATVT), 2919-3010 (PNFL…ASIR), 3051-3141 (PAIT…ATLK), 3182-3273 (PRFI…ATIE), 3314-3407 (PAIV…FEVS), and 3448-3539 (PVFI…TKLT). Cysteine 827 and cysteine 877 are disulfide-bonded. Residues cysteine 1201 and cysteine 1265 are joined by a disulfide bond. A disulfide bridge connects residues cysteine 1618 and cysteine 1671. Intrachain disulfides connect cysteine 2016/cysteine 2069 and cysteine 2148/cysteine 2201. A compositionally biased stretch (basic and acidic residues) spans 3567-3583 (EAPRPAREDAPDADHGP). Positions 3567 to 3590 (EAPRPAREDAPDADHGPPKFTSAL) are disordered. 5 Ig-like domains span residues 3584 to 3677 (PKFT…LKVV), 3720 to 3811 (PSFS…GKIA), 3821 to 3913 (PQVV…TKIT), 3962 to 4052 (PEFR…AKLA), and 4098 to 4185 (PQFT…ATLD). 2 disulfides stabilise this stretch: cysteine 3606/cysteine 3659 and cysteine 3742/cysteine 3795. Residues 4193–4963 (RQTKLRPANF…TSQAKLTLSR (771 aa)) are required for F-actin binding. Residues 4319–4329 (DQQEVGWERPD) are compositionally biased toward basic and acidic residues. Positions 4319-4357 (DQQEVGWERPDWAGQDGTSKLPGADEGRFKKLPTPAPEL) are disordered. 4 consecutive Ig-like domains span residues 4546 to 4634 (PTIS…ANLT), 4645 to 4733 (PDFS…ARLN), 4752 to 4842 (PRFT…LVLT), and 4872 to 4960 (PHFI…AKLT).

Interacts (via Ig-like domains) with F-actin. Expressed in the pharyngeal, body wall, and anal depressor muscles. Expression in these muscles is higher in hermaphrodites than in males. Expressed in the vulva and the myoepithelial sheath of the proximal ovary. Expressed in the proximal gonad of males. Not expressed in the dense bodies of the obliquely striated body wall muscle.

The protein localises to the cytoplasm. Its subcellular location is the myofibril. It localises to the sarcomere. The protein resides in the cytoskeleton. In terms of biological role, positively regulates actin filament organization and provides mechanical stability to the myofibrils during body wall muscle contraction. Required for the organization of sarcomeric actin filaments and myosin protein myo-3 in striated body wall muscle cells. Not required for assembly of dense bodies, which are a type of integrin-based adhesion structure that link the plasma membrane to thin filaments of myofibrils, in body wall muscle. Not required for the atn-1 protein to localize to the dense bodies. The sequence is that of Kettin homolog from Caenorhabditis elegans.